The following is a 164-amino-acid chain: Putative ankyrin repeat protein RBE_0585 (164 aa).

ANK repeat units lie at residues 42–107 (NQDT…VAIL) and 126–149 (DKDT…MLDY).

The sequence is that of Putative ankyrin repeat protein RBE_0585 from Rickettsia bellii (strain RML369-C).